The primary structure comprises 346 residues: Fusaric acid resistance protein FusC (346 aa).

4 helical membrane passes run 10–30 (VIIGIVSAGVVSALVFPRYTG), 248–268 (VILALGWFWIETAWPSGVMLV), 291–311 (MGMGTALAVCTGFLLTFGIYP), and 315–335 (GFVLLCAALAPLLAIGIYMSL).

The protein belongs to the aromatic acid exporter ArAE (TC 2.A.85) family.

The protein resides in the cell membrane. Its function is as follows. Involved in the resistance (detoxification) of the fungal toxin fusaric acid. The chain is Fusaric acid resistance protein FusC (fusC) from Burkholderia cepacia (Pseudomonas cepacia).